Reading from the N-terminus, the 430-residue chain is Histidinol dehydrogenase (430 aa).

NAD(+)-binding residues include Y130, Q191, and N214. Substrate contacts are provided by S237, Q259, and H262. The Zn(2+) site is built by Q259 and H262. Residues E327 and H328 each act as proton acceptor in the active site. Residues H328, D361, E415, and H420 each contribute to the substrate site. D361 provides a ligand contact to Zn(2+). Position 420 (H420) interacts with Zn(2+).

Belongs to the histidinol dehydrogenase family. Requires Zn(2+) as cofactor.

The catalysed reaction is L-histidinol + 2 NAD(+) + H2O = L-histidine + 2 NADH + 3 H(+). It functions in the pathway amino-acid biosynthesis; L-histidine biosynthesis; L-histidine from 5-phospho-alpha-D-ribose 1-diphosphate: step 9/9. Catalyzes the sequential NAD-dependent oxidations of L-histidinol to L-histidinaldehyde and then to L-histidine. This chain is Histidinol dehydrogenase (hisD), found in Zymomonas mobilis subsp. mobilis (strain ATCC 31821 / ZM4 / CP4).